A 368-amino-acid chain; its full sequence is N-succinylamino acid racemase (368 aa).

Residues serine 135 and 161–163 (KLK) each bind 2-succinylbenzoate. Lysine 163 serves as the catalytic Proton donor. Aspartate 189 is a Mg(2+) binding site. 2-succinylbenzoate is bound at residue asparagine 191. Mg(2+)-binding residues include glutamate 214 and aspartate 239. Catalysis depends on lysine 263, which acts as the Proton acceptor. Isoleucine 293 serves as a coordination point for 2-succinylbenzoate.

Belongs to the mandelate racemase/muconate lactonizing enzyme family. MenC type 2 subfamily. Homooctamer. A divalent metal cation serves as cofactor.

The enzyme catalyses N-acetyl-D-methionine = N-acetyl-L-methionine. It catalyses the reaction (1R,6R)-6-hydroxy-2-succinyl-cyclohexa-2,4-diene-1-carboxylate = 2-succinylbenzoate + H2O. With respect to regulation, inhibited by EDTA and sulfhydryl reagents such as p-chloromercuribenzoic acid. Both OSBS and NAAAR activities are inhibited competitively by salicylhydroxamate. Functionally, acts as a N-succinylamino acid racemase (NSAR) that catalyzes the racemization of N-succinyl-phenylglycine and N-succinyl-methionine. Can catalyze the racemization of a broad range of N-acylamino acids, including N-acetyl-D/L-methionine, N-propionyl-D/L-methionine, N-butyryl-D/L-methionine and N-chloroacetyl-L-valine. Also converts 2-succinyl-6-hydroxy-2,4-cyclohexadiene-1-carboxylate (SHCHC) to 2-succinylbenzoate (OSB). Catalyzes both N-succinylamino acid racemization and OSB synthesis at equivalent rates. NSAR is probably the biological function of this enzyme. This is N-succinylamino acid racemase from Amycolatopsis sp.